Reading from the N-terminus, the 94-residue chain is MTKRTKKVGVTGKYGVRYGASLRRDVRKIEVQQHSRYQCPFCGRNTVKRTAAGIWCCNGKGCKKVLAGGAWTVTTAAATSARSTIRRLREMVEV.

The C4-type zinc-finger motif lies at 39 to 62 (CPFCGRNTVKRTAAGIWCCNGKGC).

The protein belongs to the eukaryotic ribosomal protein eL43 family. Component of the large ribosomal subunit (LSU). Mature yeast ribosomes consist of a small (40S) and a large (60S) subunit. The 40S small subunit contains 1 molecule of ribosomal RNA (18S rRNA) and at least 33 different proteins. The large 60S subunit contains 3 rRNA molecules (25S, 5.8S and 5S rRNA) and at least 46 different proteins.

The protein resides in the cytoplasm. Its function is as follows. Component of the ribosome, a large ribonucleoprotein complex responsible for the synthesis of proteins in the cell. The small ribosomal subunit (SSU) binds messenger RNAs (mRNAs) and translates the encoded message by selecting cognate aminoacyl-transfer RNA (tRNA) molecules. The large subunit (LSU) contains the ribosomal catalytic site termed the peptidyl transferase center (PTC), which catalyzes the formation of peptide bonds, thereby polymerizing the amino acids delivered by tRNAs into a polypeptide chain. The nascent polypeptides leave the ribosome through a tunnel in the LSU and interact with protein factors that function in enzymatic processing, targeting, and the membrane insertion of nascent chains at the exit of the ribosomal tunnel. In Schizosaccharomyces pombe (strain 972 / ATCC 24843) (Fission yeast), this protein is Large ribosomal subunit protein eL43A (rpl4301).